Reading from the N-terminus, the 750-residue chain is MTIESIRVKNLLSFDDVILRDFRDINCIIGRNNVGKSNLLKVIRYFYAKLENKKVIPLDFHTNYNAVGEITFTFDTTRIKKIVTSRKNNGRFHKHIYNTLFKSSSVKLNFEELIARKNSTNKSFFSLTLTICKDDSVMWSVDDPKVRSLLATLYPFLYIETRHIDLYDWNPIWKLISNLNSFNFDDVDHDELVNFLDEKISSRKGDYKKYIDRVVSVIDTKPYTYKEKVINYIKVAIKGDSFVNAGEELFTQSDGTNSNKFLETLLHLLITLTRTEFISPIVYIDEPEVGLHPKLAESFVSNLNKIYSKFKKTSELSGPGRYKTPYPNIFYSTHSPSILKQTIKLFGKDQQVLHFSKKKDGSTRVNKINSTYSDERFLNIFSDNEARLFFSEYIVFVEGATELELFRNLSLLNLYPAFSLADIYDANEVILANINPGYSKASIPFVIIKDIDTLIDYSIKTEKFSLRPLFEKMIKELTKEFDYYDTGFGRVRKEIDLFSDIQSSTKKHMDSGLFFKRFSLHNLSSRINKVSRKLNRYFMTTTIEGALINEQSLPYFFNWIGDVILTQMTINNPNPDKFIEAMRRRYNIKSQVVPLFKSVFCIGLNHPVYSSAVDKQALRIKLSFLNYLKRKVYSDFNNEKEIVLALRLAFGGKTETQYTLDKLRKDGEAELFREKIKNYKNNELFFLEPQMTKTSGWVTTFLNYTIEKITSEESDDDRIRQKLSFIFPEIISIIEQASSSIEAEESSLTG.

The tract at residues 1–173 (MTIESIRVKN…IDLYDWNPIW (173 aa)) is ATPase domain N-terminus. Position 33-37 (33-37 (NVGKS)) interacts with ATP. The interval 174–260 (KLISNLNSFN…TQSDGTNSNK (87 aa)) is dimerization domain. The ATPase domain C-terminus stretch occupies residues 261-390 (FLETLLHLLI…FSDNEARLFF (130 aa)). Residues 391-704 (SEYIVFVEGA…SGWVTTFLNY (314 aa)) are toprim domain. Residues Glu-398, Glu-402, Asp-450, Asp-452, Ser-623, and Glu-641 each coordinate a divalent metal cation.

The protein belongs to the class 1 OLD nuclease family. Homodimer. It depends on a divalent metal cation as a cofactor.

Probable nuclease member of antiviral defense system retron Eco8, composed of an reverse transcriptase (RT), this nuclease and a non-coding RNA (ncRNA) encoded between them. Expression of retron Eco8 confers protection against bacteriophages T4, T6, T7 and SECphi4, SECphi6 and SECphi18. At multiplicity of infection (MOI) of 0.02 cultures slow growth when infected with SECphi4 but do not collapse, at MOI 2 cultures collapse. When the retron is cloned in another E.coli strain synthesizes msDNA (a branched RNA linked by a 2',5'-phosphodiester bond to a single-stranded DNA). The retron transcript serves as primer and template to the reaction, and codes for the RT. In Escherichia coli, this protein is Retron Eco8 OLD nuclease.